Here is a 74-residue protein sequence, read N- to C-terminus: Protein SspS (74 aa).

Belongs to the alpha/beta-type SASP family.

This chain is Protein SspS (sspS), found in Streptococcus pyogenes.